The chain runs to 399 residues: Phosphoglycerate kinase (399 aa).

Residues 24–26, arginine 39, 62–65, arginine 121, and arginine 154 each bind substrate; these read DYN and HLGR. ATP is bound by residues lysine 204, glycine 295, glutamate 326, and 355-358; that span reads GGDS.

Belongs to the phosphoglycerate kinase family. Monomer.

It is found in the cytoplasm. It carries out the reaction (2R)-3-phosphoglycerate + ATP = (2R)-3-phospho-glyceroyl phosphate + ADP. The protein operates within carbohydrate degradation; glycolysis; pyruvate from D-glyceraldehyde 3-phosphate: step 2/5. In Elusimicrobium minutum (strain Pei191), this protein is Phosphoglycerate kinase.